The chain runs to 161 residues: MQDAITAVINASDVQGKYLDTAAMEKLKAYFATGELRVRAASVISANAANIVKEAVAKSLLYSDITRPGGNMYTTRRYAACIRDLDYYLRYATYAMLAGDPSILDERVLNGLKETYNSLGVPIAATVQAIQAMKEVTASLVGADAGKEMGIYFDYICSGLS.

The residue at position 71 (Asn71) is an N4-methylasparagine. Cys81 serves as a coordination point for (2R,3E)-phycocyanobilin.

Belongs to the phycobiliprotein family. Heterodimer of an alpha and a beta chain. Contains one covalently linked phycocyanobilin chromophore.

It localises to the cellular thylakoid membrane. Functionally, light-harvesting photosynthetic bile pigment-protein from the phycobiliprotein complex. Allophycocyanin has a maximum absorption at approximately 650 nanometers. The polypeptide is Allophycocyanin beta chain (apcB) (Thermosynechococcus vestitus (strain NIES-2133 / IAM M-273 / BP-1)).